We begin with the raw amino-acid sequence, 197 residues long: Holliday junction branch migration complex subunit RuvA (197 aa).

The interval 1 to 63 (MYAYLKGIIT…EDAHLLYGFR (63 aa)) is domain I. Positions 64 to 142 (SEDEKKLFLS…VAGDGLPAKV (79 aa)) are domain II. Residues 143 to 147 (AVQAS) form a flexible linker region. The domain III stretch occupies residues 148-197 (AENQELEEAMEAMLALGYKATELKKIKKFFEGTTDTAENYIKSALKMLVK).

Belongs to the RuvA family. In terms of assembly, homotetramer. Forms an RuvA(8)-RuvB(12)-Holliday junction (HJ) complex. HJ DNA is sandwiched between 2 RuvA tetramers; dsDNA enters through RuvA and exits via RuvB. An RuvB hexamer assembles on each DNA strand where it exits the tetramer. Each RuvB hexamer is contacted by two RuvA subunits (via domain III) on 2 adjacent RuvB subunits; this complex drives branch migration. In the full resolvosome a probable DNA-RuvA(4)-RuvB(12)-RuvC(2) complex forms which resolves the HJ.

The protein resides in the cytoplasm. Functionally, the RuvA-RuvB-RuvC complex processes Holliday junction (HJ) DNA during genetic recombination and DNA repair, while the RuvA-RuvB complex plays an important role in the rescue of blocked DNA replication forks via replication fork reversal (RFR). RuvA specifically binds to HJ cruciform DNA, conferring on it an open structure. The RuvB hexamer acts as an ATP-dependent pump, pulling dsDNA into and through the RuvAB complex. HJ branch migration allows RuvC to scan DNA until it finds its consensus sequence, where it cleaves and resolves the cruciform DNA. The protein is Holliday junction branch migration complex subunit RuvA of Streptococcus pneumoniae serotype 2 (strain D39 / NCTC 7466).